Here is a 263-residue protein sequence, read N- to C-terminus: Aquaporin Lacbi1:247946 (263 aa).

Topologically, residues 1-18 are cytoplasmic; sequence MKLTISHHKCAIRKVMAE. Residues 19-39 form a helical membrane-spanning segment; that stretch reads FVGVALLVIFGAGTACQVVLS. Topologically, residues 40 to 45 are extracellular; the sequence is TNPSSF. A helical transmembrane segment spans residues 46-66; that stretch reads LSINFGWAIGIATGAWVSAGI. Residues 67–89 lie on the Cytoplasmic side of the membrane; the sequence is SGGHINPAITIAMATYRGFPWRE. An NPA 1 motif is present at residues 72–74; that stretch reads NPA. The chain crosses the membrane as a helical span at residues 90 to 110; that stretch reads VPGYIFAQALGGFVGAALVYA. Residues 111–143 are Extracellular-facing; that stretch reads NYFHAIDIFEGGHIRTQATASLFATFALPYMTQ. A helical transmembrane segment spans residues 144–164; it reads ASCFFSEFLATAVLFIVFLAL. The Cytoplasmic segment spans residues 165–169; the sequence is NDKHN. The chain crosses the membrane as a helical span at residues 170–190; the sequence is GALTNGLLPFALFILFIGLGA. Over 191-227 the chain is Extracellular; sequence SLGMQTGYAVNPARDFGPRLFLAMAGYGKAVFNYRRQ. Positions 201 to 203 match the NPA 2 motif; it reads NPA. The chain crosses the membrane as a helical span at residues 228 to 248; that stretch reads YWIWAPIIAPILGAQAGGLLY. Residues 249–263 lie on the Cytoplasmic side of the membrane; it reads DTSIYNGDDSPIKWR.

The protein belongs to the MIP/aquaporin (TC 1.A.8) family.

It localises to the membrane. It carries out the reaction H2O(in) = H2O(out). In terms of biological role, water channel required to facilitate the transport of water across membranes. Shows low but significant water conductivity, but no glycerol nor ammonium transport activities. The polypeptide is Aquaporin Lacbi1:247946 (Laccaria bicolor (strain S238N-H82 / ATCC MYA-4686) (Bicoloured deceiver)).